We begin with the raw amino-acid sequence, 88 residues long: uncharacterized protein (88 aa).

This is an uncharacterized protein from Gracula (BFDV).